We begin with the raw amino-acid sequence, 180 residues long: dCTP deaminase, dUMP-forming (180 aa).

DCTP contacts are provided by residues 96 to 101 (RSSLGR), aspartate 113, 121 to 123 (TLE), glutamine 142, tyrosine 156, and glutamine 163. The active-site Proton donor/acceptor is glutamate 123.

This sequence belongs to the dCTP deaminase family. As to quaternary structure, homotrimer.

It carries out the reaction dCTP + 2 H2O = dUMP + NH4(+) + diphosphate. Its pathway is pyrimidine metabolism; dUMP biosynthesis; dUMP from dCTP: step 1/1. In terms of biological role, bifunctional enzyme that catalyzes both the deamination of dCTP to dUTP and the hydrolysis of dUTP to dUMP without releasing the toxic dUTP intermediate. This is dCTP deaminase, dUMP-forming from Aquifex aeolicus (strain VF5).